We begin with the raw amino-acid sequence, 339 residues long: NADPH dehydrogenase (339 aa).

21-24 (PPMC) is a binding site for FMN. Tyr-26 provides a ligand contact to substrate. FMN-binding residues include Ala-57 and Gln-99. Residue 162-165 (HGAH) coordinates substrate. FMN contacts are provided by residues Arg-215 and 307 to 308 (GR).

The protein belongs to the NADH:flavin oxidoreductase/NADH oxidase family. NamA subfamily. In terms of assembly, homotetramer. FMN is required as a cofactor.

It carries out the reaction A + NADPH + H(+) = AH2 + NADP(+). Functionally, catalyzes the reduction of the double bond of an array of alpha,beta-unsaturated aldehydes and ketones. It also reduces the nitro group of nitroester and nitroaromatic compounds. It could have a role in detoxification processes. The protein is NADPH dehydrogenase of Clostridium acetobutylicum (strain ATCC 824 / DSM 792 / JCM 1419 / IAM 19013 / LMG 5710 / NBRC 13948 / NRRL B-527 / VKM B-1787 / 2291 / W).